The chain runs to 355 residues: DNA-directed RNA polymerase subunit alpha (355 aa).

The alpha N-terminal domain (alpha-NTD) stretch occupies residues 1–248 (MYYDDGIPVF…EQLQPFISSD (248 aa)). Positions 267–355 (YDPILLRKVD…ELARQHTDED (89 aa)) are alpha C-terminal domain (alpha-CTD).

Belongs to the RNA polymerase alpha chain family. As to quaternary structure, homodimer. The RNAP catalytic core consists of 2 alpha, 1 beta, 1 beta' and 1 omega subunit. When a sigma factor is associated with the core the holoenzyme is formed, which can initiate transcription.

It catalyses the reaction RNA(n) + a ribonucleoside 5'-triphosphate = RNA(n+1) + diphosphate. Functionally, DNA-dependent RNA polymerase catalyzes the transcription of DNA into RNA using the four ribonucleoside triphosphates as substrates. In Wolbachia sp. subsp. Brugia malayi (strain TRS), this protein is DNA-directed RNA polymerase subunit alpha.